A 357-amino-acid polypeptide reads, in one-letter code: UDP-N-acetylglucosamine--N-acetylmuramyl-(pentapeptide) pyrophosphoryl-undecaprenol N-acetylglucosamine transferase (357 aa).

Residues Thr13–Gly15, Asn125, Arg161, Ser189, Ile243, and Gln288 contribute to the UDP-N-acetyl-alpha-D-glucosamine site.

The protein belongs to the glycosyltransferase 28 family. MurG subfamily.

Its subcellular location is the cell inner membrane. The catalysed reaction is di-trans,octa-cis-undecaprenyl diphospho-N-acetyl-alpha-D-muramoyl-L-alanyl-D-glutamyl-meso-2,6-diaminopimeloyl-D-alanyl-D-alanine + UDP-N-acetyl-alpha-D-glucosamine = di-trans,octa-cis-undecaprenyl diphospho-[N-acetyl-alpha-D-glucosaminyl-(1-&gt;4)]-N-acetyl-alpha-D-muramoyl-L-alanyl-D-glutamyl-meso-2,6-diaminopimeloyl-D-alanyl-D-alanine + UDP + H(+). Its pathway is cell wall biogenesis; peptidoglycan biosynthesis. Functionally, cell wall formation. Catalyzes the transfer of a GlcNAc subunit on undecaprenyl-pyrophosphoryl-MurNAc-pentapeptide (lipid intermediate I) to form undecaprenyl-pyrophosphoryl-MurNAc-(pentapeptide)GlcNAc (lipid intermediate II). The protein is UDP-N-acetylglucosamine--N-acetylmuramyl-(pentapeptide) pyrophosphoryl-undecaprenol N-acetylglucosamine transferase of Polynucleobacter asymbioticus (strain DSM 18221 / CIP 109841 / QLW-P1DMWA-1) (Polynucleobacter necessarius subsp. asymbioticus).